The sequence spans 928 residues: Isoleucine--tRNA ligase (928 aa).

A 'HIGH' region motif is present at residues Pro-57–His-67. An L-isoleucyl-5'-AMP-binding site is contributed by Glu-554. A 'KMSKS' region motif is present at residues Lys-595 to Ser-599. Lys-598 is an ATP binding site. Zn(2+)-binding residues include Cys-887, Cys-890, Cys-907, and Cys-910.

It belongs to the class-I aminoacyl-tRNA synthetase family. IleS type 1 subfamily. Monomer. Zn(2+) serves as cofactor.

It is found in the cytoplasm. It catalyses the reaction tRNA(Ile) + L-isoleucine + ATP = L-isoleucyl-tRNA(Ile) + AMP + diphosphate. Functionally, catalyzes the attachment of isoleucine to tRNA(Ile). As IleRS can inadvertently accommodate and process structurally similar amino acids such as valine, to avoid such errors it has two additional distinct tRNA(Ile)-dependent editing activities. One activity is designated as 'pretransfer' editing and involves the hydrolysis of activated Val-AMP. The other activity is designated 'posttransfer' editing and involves deacylation of mischarged Val-tRNA(Ile). This Lactobacillus johnsonii (strain CNCM I-12250 / La1 / NCC 533) protein is Isoleucine--tRNA ligase.